The primary structure comprises 118 residues: Large ribosomal subunit protein bL19 (118 aa).

It belongs to the bacterial ribosomal protein bL19 family.

In terms of biological role, this protein is located at the 30S-50S ribosomal subunit interface and may play a role in the structure and function of the aminoacyl-tRNA binding site. This chain is Large ribosomal subunit protein bL19, found in Campylobacter fetus subsp. fetus (strain 82-40).